Reading from the N-terminus, the 243-residue chain is Probable fructoselysine utilization operon transcriptional repressor (243 aa).

In terms of domain architecture, HTH gntR-type spans 10 to 78 (QLLYATVRQR…QGKGTFVQSQ (69 aa)). Residues 38 to 57 (ENELCTQYNVSRITIRKAIS) constitute a DNA-binding region (H-T-H motif).

The protein operates within carbohydrate metabolism; fructoselysine degradation [regulation]. In terms of biological role, may regulate the transcription of the frlABCDR operon, involved in the utilization of fructoselysine and psicoselysine. This is Probable fructoselysine utilization operon transcriptional repressor (frlR) from Shigella flexneri.